Reading from the N-terminus, the 1605-residue chain is Sister chromatid cohesion protein PDS5 homolog A (1605 aa).

14 HEAT repeats span residues 50–89, 96–136, 146–183, 184–221, 261–298, 302–339, 341–378, 380–416, 552–591, 644–681, 723–758, 821–860, 961–1000, and 1050–1088; these read KSIQPFLDAVIKPEILNHQDKDVKLLVASCVSEITRITAP, NIMK…YRSC, DLVKEVFTTFLDVARDDHPEIVFSSMQNIMIVLLEESE, DVQEHLLLILLSKLGRNRSDVRDAARRLAMKVIEHCAP, QALSGVAPYLTGELLADKLETRLKVVGLVGELFSLPGR, EEFDSIFLEFLKRLTDRVVEVRMAILDHIKDCLLSDPL, AEASQIISALCDRLLDYDENIRKQVVAVICDVSVSALT, IPVDTMKLVAERLRDKAILVKTYTMERLTELFRVYCL, ANIWKILTNLLDPNTSITQASRIRDDMLKILSEKHSLYDF, SLFDGAEEELISFLKDDDEMMKEGTLKILAKAGGTIRE, KSLSVLYKRLVDMLEDKRYQPAVLQCLGCIAQIAMP, AGVDDLLGILKNILSFGEVSEDLESSSVDKAHLRLAAAKA, LYPHHILPYLVHALAHHSCPDVEKCKDVKEYEMIYRQLYL, and HAICELGLSIINHLTQKEPDLQGEITPVSLPPTLYKPSE. Disordered regions lie at residues 1155-1182 and 1203-1262; these read LRAQGTKTRKGKKNKSVPAEDENGKNDV and ESSN…PKVQ. Residues 1211–1225 show a composition bias toward basic and acidic residues; the sequence is SPSERAEICQRDQKG. Positions 1226–1233 match the Nuclear localization signal 1 motif; the sequence is NKRNVGDA. Ser1274 is modified (phosphoserine). Residues 1279–1295 show a composition bias toward basic and acidic residues; the sequence is NVSLDSHDENSDQEKML. Disordered stretches follow at residues 1279-1307, 1324-1353, and 1423-1605; these read NVSLDSHDENSDQEKMLESISPRKRKKSL, ERSRSAGGGDSKLKSASGSMKKRKNVSGLA, and GKTA…RTAI. The residue at position 1299 (Ser1299) is a Phosphoserine. 2 stretches are compositionally biased toward basic residues: residues 1425–1442 and 1464–1476; these read TAKKSRTSKGNSKKKRSS and KGKRTPKKNLKQL. The Nuclear localization signal 2 motif lies at 1426-1433; it reads AKKSRTSK. Composition is skewed to basic and acidic residues over residues 1477-1495, 1514-1527, and 1534-1574; these read HPKDTPKSLSLEHEKVESR, GEEKSESEGKSLKE, and VVNK…NEME. 3 positions are modified to phosphoserine: Ser1524, Ser1562, and Ser1584. The span at 1575–1585 shows a compositional bias: acidic residues; the sequence is REAEENAETSD. Thr1588 is subject to Phosphothreonine.

This sequence belongs to the PDS5 family. Interacts with the cohesin complex. Interacts with DEK3.

The protein localises to the nucleus. Its function is as follows. Cohesin cofactor dispensable during the meiotic division but playing an important role in DNA repair by homologous recombination (HR) probably by helping SMC5/SMC6 complex. Regulator of sister chromatid cohesion in mitosis which may stabilize cohesin complex association with chromatin. May couple sister chromatid cohesion during mitosis to DNA replication. Cohesion ensures that chromosome partitioning is accurate in both meiotic and mitotic cells and plays an important role in DNA repair. The protein is Sister chromatid cohesion protein PDS5 homolog A of Arabidopsis thaliana (Mouse-ear cress).